Consider the following 131-residue polypeptide: Lymphocyte antigen 6E (131 aa).

An N-terminal signal peptide occupies residues 1 to 20; the sequence is MKIFLPVLLAALLGVERASS. Residues 21 to 101 enclose the UPAR/Ly6 domain; sequence LMCFSCLNQK…CCQSFLCNFS (81 aa). Disulfide bonds link cysteine 23/cysteine 48, cysteine 26/cysteine 35, cysteine 41/cysteine 71, cysteine 75/cysteine 92, and cysteine 93/cysteine 98. An N-linked (GlcNAc...) asparagine glycan is attached at asparagine 99. Serine 101 is lipidated: GPI-anchor amidated serine. A propeptide spans 102–131 (removed in mature form); it reads AADGGLRASVTLLGAGLLLSLLPALLRFGP.

In terms of assembly, interacts with CHRNA4. Widely expressed, predominantly in liver, kidney, ovary, spleen and peripheral blood Leukocytes.

The protein localises to the cell membrane. Its function is as follows. GPI-anchored cell surface protein that regulates T-lymphocytes proliferation, differentiation, and activation. Regulates the T-cell receptor (TCR) signaling by interacting with component CD3Z/CD247 at the plasma membrane, leading to CD3Z/CD247 phosphorylation modulation. Restricts the entry of human coronaviruses, including SARS-CoV, MERS-CoV and SARS-CoV-2, by interfering with spike protein-mediated membrane fusion. Also plays an essential role in placenta formation by acting as the main receptor for syncytin-A (SynA). Therefore, participates in the normal fusion of syncytiotrophoblast layer I (SynT-I) and in the proper morphogenesis of both fetal and maternal vasculatures within the placenta. May also act as a modulator of nicotinic acetylcholine receptors (nAChRs) activity. (Microbial infection) Promotes entry, likely through an enhanced virus-cell fusion process, of various viruses including HIV-1, West Nile virus, dengue virus and Zika virus. In contrast, the paramyxovirus PIV5, which enters at the plasma membrane, does not require LY6E. Mechanistically, adopts a microtubule-like organization upon viral infection and enhances viral uncoating after endosomal escape. The protein is Lymphocyte antigen 6E of Homo sapiens (Human).